The primary structure comprises 727 residues: Adhesion G protein-coupled receptor L4 (727 aa).

The first 19 residues, 1–19, serve as a signal peptide directing secretion; it reads MKLLLFAAWFSSLLDPCRF. Residues 20-467 lie on the Extracellular side of the membrane; the sequence is LDICQSCHPN…LAHYNVLTRI (448 aa). One can recognise an EGF-like 1; calcium-binding domain in the interval 52–90; that stretch reads DDNECETVPEICGLHANCTNYVGGYYCNCLSGFISNGTE. Disulfide bonds link cysteine 56/cysteine 69, cysteine 63/cysteine 78, cysteine 106/cysteine 118, cysteine 112/cysteine 127, cysteine 408/cysteine 438, and cysteine 426/cysteine 440. The EGF-like 2; calcium-binding domain occupies 102-139; sequence DINECEEDRKCGPNSKCHNNIGSFICSCLRGYTSPAGP. One can recognise a GAIN-B domain in the interval 282–456; it reads TQMQVHAGDV…AILMSSARAN (175 aa). Residues 408-456 form a GPS region; that stretch reads CAFWEYSPSMMGHWSLDGCIRTRVNTTHTSCSCNHLTHFAILMSSARAN. A helical transmembrane segment spans residues 468–488; that stretch reads TQLGMVISLICLSMCIFTFWF. Topologically, residues 489–496 are cytoplasmic; sequence FRDIQNTR. Residues 497–517 form a helical membrane-spanning segment; that stretch reads TTIHKNLCCSLFMAQFIFLIG. At 518–535 the chain is on the extracellular side; the sequence is INKSAHKWFCSLIAGLLH. The chain crosses the membrane as a helical span at residues 536-556; the sequence is YFFLAAFAWMCIEGIHLYLIV. At 557 to 568 the chain is on the cytoplasmic side; that stretch reads VGVIYNKGFLHR. Residues 569 to 589 form a helical membrane-spanning segment; that stretch reads NFYAFGYGSPAVVVAISATLG. Topologically, residues 590-609 are extracellular; that stretch reads YKYYGTSSVCWLSTENNFIW. Residues 610 to 630 form a helical membrane-spanning segment; sequence SFIGPAILIILVNLLAFAVII. The Cytoplasmic segment spans residues 631–654; the sequence is YKVYRHTAVKKPEISHYENIRSCA. A helical membrane pass occupies residues 655–675; that stretch reads RGAIALLFVLGVTWAFGVMYI. Topologically, residues 676–682 are extracellular; sequence LYETTLT. A helical transmembrane segment spans residues 683–703; sequence AYLFTFANVFQGMFIFIFLCV.

This sequence belongs to the G-protein coupled receptor 2 family. Adhesion G-protein coupled receptor (ADGR) subfamily. As to quaternary structure, heterodimer of 2 chains generated by proteolytic processing; the large extracellular N-terminal fragment and the membrane-bound C-terminal fragment predominantly remain associated and non-covalently linked. In terms of processing, autoproteolytically processed at the GPS region of the GAIN-B domain; this cleavage modulates receptor activity.

It localises to the cell membrane. Functionally, orphan receptor that plays a role in vessel formation. This is Adhesion G protein-coupled receptor L4 from Danio rerio (Zebrafish).